The chain runs to 608 residues: Aspartate--tRNA(Asp/Asn) ligase (608 aa).

Residue glutamate 175 coordinates L-aspartate. The tract at residues 199-202 is aspartate; the sequence is QLFK. Residue arginine 221 coordinates L-aspartate. ATP contacts are provided by residues 221–223 and glutamine 230; that span reads RDE. Histidine 453 is an L-aspartate binding site. Glutamate 487 is an ATP binding site. Arginine 494 is an L-aspartate binding site. 539-542 provides a ligand contact to ATP; it reads GWDR. The tract at residues 566–608 is disordered; sequence IDPLTDAPAAITPQQRKEAGIDAKPKPKAEAQAEAQAEESAEK. A compositionally biased stretch (basic and acidic residues) spans 580–596; that stretch reads QRKEAGIDAKPKPKAEA.

It belongs to the class-II aminoacyl-tRNA synthetase family. Type 1 subfamily. In terms of assembly, homodimer.

The protein resides in the cytoplasm. It catalyses the reaction tRNA(Asx) + L-aspartate + ATP = L-aspartyl-tRNA(Asx) + AMP + diphosphate. In terms of biological role, aspartyl-tRNA synthetase with relaxed tRNA specificity since it is able to aspartylate not only its cognate tRNA(Asp) but also tRNA(Asn). Reaction proceeds in two steps: L-aspartate is first activated by ATP to form Asp-AMP and then transferred to the acceptor end of tRNA(Asp/Asn). The chain is Aspartate--tRNA(Asp/Asn) ligase from Corynebacterium glutamicum (strain ATCC 13032 / DSM 20300 / JCM 1318 / BCRC 11384 / CCUG 27702 / LMG 3730 / NBRC 12168 / NCIMB 10025 / NRRL B-2784 / 534).